The following is a 490-amino-acid chain: Glutamate--tRNA ligase (490 aa).

The short motif at Pro9 to Gly19 is the 'HIGH' region element. A 'KMSKS' region motif is present at residues Lys251–Arg255. Position 254 (Lys254) interacts with ATP.

Belongs to the class-I aminoacyl-tRNA synthetase family. Glutamate--tRNA ligase type 1 subfamily. Monomer.

The protein localises to the cytoplasm. It carries out the reaction tRNA(Glu) + L-glutamate + ATP = L-glutamyl-tRNA(Glu) + AMP + diphosphate. Functionally, catalyzes the attachment of glutamate to tRNA(Glu) in a two-step reaction: glutamate is first activated by ATP to form Glu-AMP and then transferred to the acceptor end of tRNA(Glu). This is Glutamate--tRNA ligase from Borreliella burgdorferi (strain ATCC 35210 / DSM 4680 / CIP 102532 / B31) (Borrelia burgdorferi).